Consider the following 57-residue polypeptide: UPF0391 membrane protein Xaut_1725 (57 aa).

Helical transmembrane passes span 4–24 and 30–50; these read WAVT…GGIA and IAKI…VAGL.

It belongs to the UPF0391 family.

It is found in the cell membrane. In Xanthobacter autotrophicus (strain ATCC BAA-1158 / Py2), this protein is UPF0391 membrane protein Xaut_1725.